The following is a 383-amino-acid chain: Aliphatic nitrilase (383 aa).

Residues Val-13–Leu-288 form the CN hydrolase domain. The active-site Proton acceptor is the Glu-53. The Proton donor role is filled by Lys-136. Catalysis depends on Cys-170, which acts as the Nucleophile. The tract at residues Ala-359–Ala-383 is disordered.

It belongs to the carbon-nitrogen hydrolase superfamily. Nitrilase family.

The enzyme catalyses an aliphatic nitrile + 2 H2O = a carboxylate + NH4(+). Functionally, acts on aliphatic nitriles such as acrylonitrile, crotononitrile and glutaronitrile. In Rhodococcus rhodochrous, this protein is Aliphatic nitrilase.